A 279-amino-acid polypeptide reads, in one-letter code: Small ribosomal subunit protein uS3 (279 aa).

The 70-residue stretch at 17–86 folds into the KH type-2 domain; the sequence is VDEYFLEKLE…NPQIDVQEVK (70 aa). 2 stretches are compositionally biased toward low complexity: residues 206–233 and 241–252; these read AEKKSPAAGAEPAKEAAAVPAPAESTAA and ESEAAEAVTPEG. The tract at residues 206–279 is disordered; it reads AEKKSPAAGA…VVKTDGDSQS (74 aa).

The protein belongs to the universal ribosomal protein uS3 family. Part of the 30S ribosomal subunit.

Functionally, binds the lower part of the 30S subunit head. This chain is Small ribosomal subunit protein uS3, found in Methanocella arvoryzae (strain DSM 22066 / NBRC 105507 / MRE50).